The following is a 37-amino-acid chain: Large ribosomal subunit protein bL36c (37 aa).

This sequence belongs to the bacterial ribosomal protein bL36 family.

It is found in the plastid. Its subcellular location is the chloroplast. This Physcomitrium patens (Spreading-leaved earth moss) protein is Large ribosomal subunit protein bL36c.